A 68-amino-acid chain; its full sequence is Protein SlyX homolog (68 aa).

This sequence belongs to the SlyX family.

This Brucella melitensis biotype 1 (strain ATCC 23456 / CCUG 17765 / NCTC 10094 / 16M) protein is Protein SlyX homolog.